A 175-amino-acid chain; its full sequence is Putative transmembrane protein ORF175 (175 aa).

Transmembrane regions (helical) follow at residues 14-34 (LGIVYGSTLIILLLPLIGSFM), 58-78 (VLSNFGIFGGLALGVGSAIAF), 101-121 (IVVALLVSQFIFGGWATFALF), and 142-162 (ITPFIDGLIATLGGLMVVLSI).

Its subcellular location is the host membrane. This is Putative transmembrane protein ORF175 from Acidianus two-tailed virus (ATV).